Here is a 395-residue protein sequence, read N- to C-terminus: Acetate kinase (395 aa).

A Mg(2+)-binding site is contributed by Asn8. Lys15 contacts ATP. Arg89 serves as a coordination point for substrate. The active-site Proton donor/acceptor is Asp146. ATP contacts are provided by residues 206 to 210 (HLGNG), 281 to 283 (DLR), and 329 to 333 (GIGEN). Glu382 contributes to the Mg(2+) binding site.

It belongs to the acetokinase family. Homodimer. Mg(2+) is required as a cofactor. It depends on Mn(2+) as a cofactor.

It is found in the cytoplasm. The catalysed reaction is acetate + ATP = acetyl phosphate + ADP. The protein operates within metabolic intermediate biosynthesis; acetyl-CoA biosynthesis; acetyl-CoA from acetate: step 1/2. In terms of biological role, catalyzes the formation of acetyl phosphate from acetate and ATP. Can also catalyze the reverse reaction. This Shouchella clausii (strain KSM-K16) (Alkalihalobacillus clausii) protein is Acetate kinase.